Reading from the N-terminus, the 79-residue chain is Small ribosomal subunit protein bS18 (79 aa).

The protein belongs to the bacterial ribosomal protein bS18 family. As to quaternary structure, part of the 30S ribosomal subunit. Forms a tight heterodimer with protein bS6.

Functionally, binds as a heterodimer with protein bS6 to the central domain of the 16S rRNA, where it helps stabilize the platform of the 30S subunit. This Bacillus licheniformis (strain ATCC 14580 / DSM 13 / JCM 2505 / CCUG 7422 / NBRC 12200 / NCIMB 9375 / NCTC 10341 / NRRL NRS-1264 / Gibson 46) protein is Small ribosomal subunit protein bS18.